We begin with the raw amino-acid sequence, 379 residues long: tRNA(Met) cytidine acetate ligase (379 aa).

ATP contacts are provided by residues 7–20 (ITEYNPFHNGHQYH), Gly-100, Asn-153, and Arg-178.

Belongs to the TmcAL family.

Its subcellular location is the cytoplasm. The catalysed reaction is cytidine(34) in elongator tRNA(Met) + acetate + ATP = N(4)-acetylcytidine(34) in elongator tRNA(Met) + AMP + diphosphate. Its function is as follows. Catalyzes the formation of N(4)-acetylcytidine (ac(4)C) at the wobble position of elongator tRNA(Met), using acetate and ATP as substrates. First activates an acetate ion to form acetyladenylate (Ac-AMP) and then transfers the acetyl group to tRNA to form ac(4)C34. The polypeptide is tRNA(Met) cytidine acetate ligase (Staphylococcus aureus (strain Mu3 / ATCC 700698)).